The following is a 788-amino-acid chain: Response regulator SSK1 (788 aa).

The region spanning 534 to 691 (NVLIVEDNII…WLERKVKEWG (158 aa)) is the Response regulatory domain. Position 583 is a 4-aspartylphosphate (Asp-583).

The protein belongs to the SSK1 family.

It localises to the cytoplasm. In terms of biological role, two-domain response regulator protein in the two-component signal transduction system of the HOG1 pathway. Controls high-osmolarity adaptation and fungicide sensitivity via its regulation of the phosphorylation of HOG1. The sequence is that of Response regulator SSK1 from Cochliobolus heterostrophus (strain C5 / ATCC 48332 / race O) (Southern corn leaf blight fungus).